The primary structure comprises 283 residues: Polyamine aminopropyltransferase (283 aa).

In terms of domain architecture, PABS spans 5 to 238; that stretch reads TTWIDEYQKG…GIWSWTFASK (234 aa). Q32 contacts S-methyl-5'-thioadenosine. 2 residues coordinate spermidine: H63 and D87. S-methyl-5'-thioadenosine-binding positions include E107 and 139 to 140; that span reads DG. D158 functions as the Proton acceptor in the catalytic mechanism. 158–161 serves as a coordination point for spermidine; sequence DCSD.

The protein belongs to the spermidine/spermine synthase family. Homodimer or homotetramer.

The protein resides in the cytoplasm. The enzyme catalyses S-adenosyl 3-(methylsulfanyl)propylamine + putrescine = S-methyl-5'-thioadenosine + spermidine + H(+). It functions in the pathway amine and polyamine biosynthesis; spermidine biosynthesis; spermidine from putrescine: step 1/1. In terms of biological role, catalyzes the irreversible transfer of a propylamine group from the amino donor S-adenosylmethioninamine (decarboxy-AdoMet) to putrescine (1,4-diaminobutane) to yield spermidine. The polypeptide is Polyamine aminopropyltransferase (Prochlorococcus marinus (strain MIT 9515)).